We begin with the raw amino-acid sequence, 195 residues long: Protein RD3 (195 aa).

Positions 22 to 54 (AEMVLETLMMELAGQMREVERQQRERRSAVRKI) form a coiled coil. A compositionally biased stretch (basic and acidic residues) spans 168 to 177 (TISEDVERDA). Residues 168–195 (TISEDVERDAPPPPRTWSMPEFRAPQAD) form a disordered region.

In terms of assembly, monomer. Interacts with GUCY2E; promotes the exit of GUCY2E from the endoplasmic reticulum and its trafficking to the photoreceptor outer segments. The interaction with GUCY2E negatively regulates its activity. Interacts with GUCY2F; promotes the exit of GUCY2F from the endoplasmic reticulum and its trafficking to the photoreceptor outer segments. The interaction with GUCY2F negatively regulates its activity. Interacts with GUK1; up-regulates GUK1 activity. Expressed in the retina and in particular in the inner nuclear layer, in rod and cone outer segments, in the outer nuclear layer, in the outer plexiform layer and in the ganglion cell layer.

It localises to the cell projection. Its subcellular location is the cilium. The protein resides in the photoreceptor outer segment. The protein localises to the photoreceptor inner segment. It is found in the endosome. It localises to the nucleus. Its subcellular location is the cytoplasm. The protein resides in the perinuclear region. In terms of biological role, plays a critical role in the regulation of enzymes involved in nucleotide cycle in photoreceptors. Inhibits the basal catalytic activity and the GCAP-stimulated activity of GUCY2E and GUCY2F, two retinal guanylyl cyclases involved in the production of cGMP in photoreceptors. Involved in the transport of GUCY2E and GUCY2F to their target sites in the photoreceptor outer segment. Up-regulates the activity of GUK1, a kinase that also plays an essential role for recycling GMP and indirectly, cGMP. Plays an important role for the survival of rods and cones in the retina. The chain is Protein RD3 (Rd3) from Mus musculus (Mouse).